We begin with the raw amino-acid sequence, 65 residues long: Disintegrin CC8B (65 aa).

In terms of domain architecture, Disintegrin spans 1-65; that stretch reads NSAHPCCDPV…DCPRNPWHKS (65 aa). 4 cysteine pairs are disulfide-bonded: C6–C29, C20–C26, C25–C50, and C38–C57. A Cell attachment site; atypical (WGD) motif is present at residues 42–44; the sequence is WGD.

The protein belongs to the disintegrin family. Dimeric disintegrin subfamily. In terms of assembly, heterodimer with CC8A; disulfide-linked. As to expression, expressed by the venom gland.

The protein localises to the secreted. Its function is as follows. Inhibits integrins alpha-IIb/beta-3 (ITGA2B/ITGB3), alpha-V/beta-3 (ITGAV/ITGB3), and alpha-5/beta-1 (ITGA5/ITGB1). In Cerastes cerastes (Horned desert viper), this protein is Disintegrin CC8B.